The chain runs to 331 residues: MKRLVCVLLVCSSAVAQLHKDPTLDHHWHLWKKTYGKQYKEKNEEAVRRLIWEKNLKFVMLHNLEHSMGMHSYDLGMNHLGDMTSEEVMSLMSSLRVPSQWQRNITYKSNPNRILPDSVDWREKGCVTEVKYQGSCGACWAFSAVGALEAQLKLKTGKLVSLSAQNLVDCSTEKYGNKGCNGGFMTTAFQYIIDNKGIDSDASYPYKAMDQKCQYDSKYRAATCSKYTELPYGREDVLKEAVANKGPVSVGVDARHPSFFLYRSGVYYEPSCTQNVNHGVLVVGYGDLNGKEYWLVKNSWGHNFGEEGYIRMARNKGNHCGIASFPSYPEI.

A signal peptide spans 1–16; the sequence is MKRLVCVLLVCSSAVA. Residues 17–114 constitute a propeptide, activation peptide; the sequence is QLHKDPTLDH…ITYKSNPNRI (98 aa). N-linked (GlcNAc...) asparagine glycosylation occurs at asparagine 104. 4 disulfide bridges follow: cysteine 126-cysteine 224, cysteine 136-cysteine 180, cysteine 170-cysteine 213, and cysteine 272-cysteine 320. Cysteine 139 is a catalytic residue. Catalysis depends on residues histidine 278 and asparagine 298.

This sequence belongs to the peptidase C1 family. Monomer.

It is found in the lysosome. The protein resides in the secreted. It localises to the cytoplasmic vesicle. Its subcellular location is the phagosome. It carries out the reaction Similar to cathepsin L, but with much less activity on Z-Phe-Arg-|-NHMec, and more activity on the Z-Val-Val-Arg-|-Xaa compound.. In terms of biological role, thiol protease. Key protease responsible for the removal of the invariant chain from MHC class II molecules and MHC class II antigen presentation. The bond-specificity of this proteinase is in part similar to the specificities of cathepsin L. The protein is Cathepsin S (CTSS) of Homo sapiens (Human).